A 393-amino-acid polypeptide reads, in one-letter code: Dual-specificity RNA methyltransferase RlmN (393 aa).

The active-site Proton acceptor is Glu-115. The Radical SAM core domain maps to 121-365 (EEDRGTLCIS…APIRKTRGDD (245 aa)). Cys-128 and Cys-370 are oxidised to a cystine. The [4Fe-4S] cluster site is built by Cys-135, Cys-139, and Cys-142. S-adenosyl-L-methionine-binding positions include 194 to 195 (GE), Ser-226, 248 to 250 (SFH), and Asn-327. The active-site S-methylcysteine intermediate is the Cys-370.

This sequence belongs to the radical SAM superfamily. RlmN family. The cofactor is [4Fe-4S] cluster.

The protein localises to the cytoplasm. The enzyme catalyses adenosine(2503) in 23S rRNA + 2 reduced [2Fe-2S]-[ferredoxin] + 2 S-adenosyl-L-methionine = 2-methyladenosine(2503) in 23S rRNA + 5'-deoxyadenosine + L-methionine + 2 oxidized [2Fe-2S]-[ferredoxin] + S-adenosyl-L-homocysteine. The catalysed reaction is adenosine(37) in tRNA + 2 reduced [2Fe-2S]-[ferredoxin] + 2 S-adenosyl-L-methionine = 2-methyladenosine(37) in tRNA + 5'-deoxyadenosine + L-methionine + 2 oxidized [2Fe-2S]-[ferredoxin] + S-adenosyl-L-homocysteine. Its function is as follows. Specifically methylates position 2 of adenine 2503 in 23S rRNA and position 2 of adenine 37 in tRNAs. m2A2503 modification seems to play a crucial role in the proofreading step occurring at the peptidyl transferase center and thus would serve to optimize ribosomal fidelity. In Ruegeria pomeroyi (strain ATCC 700808 / DSM 15171 / DSS-3) (Silicibacter pomeroyi), this protein is Dual-specificity RNA methyltransferase RlmN.